The primary structure comprises 257 residues: 1-(5-phosphoribosyl)-5-[(5-phosphoribosylamino)methylideneamino] imidazole-4-carboxamide isomerase (257 aa).

Catalysis depends on Asp-8, which acts as the Proton acceptor. The Proton donor role is filled by Asp-129.

The protein belongs to the HisA/HisF family.

The protein localises to the cytoplasm. The catalysed reaction is 1-(5-phospho-beta-D-ribosyl)-5-[(5-phospho-beta-D-ribosylamino)methylideneamino]imidazole-4-carboxamide = 5-[(5-phospho-1-deoxy-D-ribulos-1-ylimino)methylamino]-1-(5-phospho-beta-D-ribosyl)imidazole-4-carboxamide. The protein operates within amino-acid biosynthesis; L-histidine biosynthesis; L-histidine from 5-phospho-alpha-D-ribose 1-diphosphate: step 4/9. The chain is 1-(5-phosphoribosyl)-5-[(5-phosphoribosylamino)methylideneamino] imidazole-4-carboxamide isomerase from Crocosphaera subtropica (strain ATCC 51142 / BH68) (Cyanothece sp. (strain ATCC 51142)).